We begin with the raw amino-acid sequence, 358 residues long: Aromatic amino acid aminotransferase (358 aa).

N6-(pyridoxal phosphate)lysine is present on Lys222.

Belongs to the class-II pyridoxal-phosphate-dependent aminotransferase family. As to quaternary structure, homodimer. Pyridoxal 5'-phosphate serves as cofactor.

It carries out the reaction an aromatic L-alpha-amino acid + 2-oxoglutarate = an aromatic oxo-acid + L-glutamate. In terms of biological role, aminotransferase that catalyzes the conversion of aromatic amino acids and 2-oxoglutarate into corresponding aromatic oxo acids and L-glutamate. This is Aromatic amino acid aminotransferase from Mycobacterium sp. (strain KMS).